A 188-amino-acid chain; its full sequence is UPF0461 protein C5orf24 homolog (188 aa).

The residue at position 37 (Ser-37) is a Phosphoserine. Lys-75 participates in a covalent cross-link: Glycyl lysine isopeptide (Lys-Gly) (interchain with G-Cter in SUMO2). A disordered region spans residues 79 to 142 (KKKKNLNRSG…GYKVSPGRPP (64 aa)). The segment covering 80–92 (KKKNLNRSGKRGR) has biased composition (basic residues). The segment covering 94-107 (SGTTKSAGYRTSTG) has biased composition (polar residues). Residues Ser-121 and Ser-180 each carry the phosphoserine modification. Lys-184 is covalently cross-linked (Glycyl lysine isopeptide (Lys-Gly) (interchain with G-Cter in SUMO2)).

This sequence belongs to the UPF0461 family.

This is UPF0461 protein C5orf24 homolog from Bos taurus (Bovine).